A 206-amino-acid chain; its full sequence is MIALGIDPGSRRCGYGVVAREGTRLVVVASGVLAPRAERPVAERLARILDGLAEVIRRAGPAECSIEQVFSGASVRSALVLGQARGVALAAAAQAGLPVFEYAPSEVKLAFTGSGRATKDQMIRTAHMLLGATPGLSDEADALALAVCHLARRAGRLAVPAVRNVAVSVPGVAGRARPLALPPARERAALAAARLRPSRRDHRGLA.

Catalysis depends on residues D7, E67, and D138. 3 residues coordinate Mg(2+): D7, E67, and D138.

This sequence belongs to the RuvC family. In terms of assembly, homodimer which binds Holliday junction (HJ) DNA. The HJ becomes 2-fold symmetrical on binding to RuvC with unstacked arms; it has a different conformation from HJ DNA in complex with RuvA. In the full resolvosome a probable DNA-RuvA(4)-RuvB(12)-RuvC(2) complex forms which resolves the HJ. Mg(2+) is required as a cofactor.

It localises to the cytoplasm. It catalyses the reaction Endonucleolytic cleavage at a junction such as a reciprocal single-stranded crossover between two homologous DNA duplexes (Holliday junction).. The RuvA-RuvB-RuvC complex processes Holliday junction (HJ) DNA during genetic recombination and DNA repair. Endonuclease that resolves HJ intermediates. Cleaves cruciform DNA by making single-stranded nicks across the HJ at symmetrical positions within the homologous arms, yielding a 5'-phosphate and a 3'-hydroxyl group; requires a central core of homology in the junction. The consensus cleavage sequence is 5'-(A/T)TT(C/G)-3'. Cleavage occurs on the 3'-side of the TT dinucleotide at the point of strand exchange. HJ branch migration catalyzed by RuvA-RuvB allows RuvC to scan DNA until it finds its consensus sequence, where it cleaves and resolves the cruciform DNA. This Anaeromyxobacter sp. (strain Fw109-5) protein is Crossover junction endodeoxyribonuclease RuvC.